A 198-amino-acid polypeptide reads, in one-letter code: Protein GrpE (198 aa).

A disordered region spans residues 1–56 (MVEKKKSQAEKNNQSATEEEIEKAVKGSKRDSNAADEKNSASAAASSSAVSDAEPA). The segment covering 22-39 (EKAVKGSKRDSNAADEKN) has biased composition (basic and acidic residues). Residues 40-56 (SASAAASSSAVSDAEPA) show a composition bias toward low complexity.

Belongs to the GrpE family. As to quaternary structure, homodimer.

It localises to the cytoplasm. Functionally, participates actively in the response to hyperosmotic and heat shock by preventing the aggregation of stress-denatured proteins, in association with DnaK and GrpE. It is the nucleotide exchange factor for DnaK and may function as a thermosensor. Unfolded proteins bind initially to DnaJ; upon interaction with the DnaJ-bound protein, DnaK hydrolyzes its bound ATP, resulting in the formation of a stable complex. GrpE releases ADP from DnaK; ATP binding to DnaK triggers the release of the substrate protein, thus completing the reaction cycle. Several rounds of ATP-dependent interactions between DnaJ, DnaK and GrpE are required for fully efficient folding. In Oenococcus oeni (strain ATCC BAA-331 / PSU-1), this protein is Protein GrpE.